We begin with the raw amino-acid sequence, 1603 residues long: MGVPTKISILGRESIVADFGIWRNYVAKDLLSNCASSTYILISDTNLTPLYLAGFQQSFENAAAGLSPKPRLLTYEIPPGESSKSRETKAEIEDWMLTRQPPCGRDTVIIALGGGVIGDLIGFVAATYMRGVRFVQVPTTLLAMVDSSIGGKTAIDTPNGKNLIGAIWQPQRIYLDMEFLNTLPEREFINGMAEVIKTAAISSEEKFAALENDADVILAAVKSKNTPDRLRFSSIQETLKRTILSSAEFKAQVVSADEREGGLRNLLNFGHSIGHAIEAILAPQVLHGECVSIGMVKEAELARHLGILNNVSVARIAKCLASYELPTSLKDERIKRLTAGKHCSVEQIITYMGVDKKNDGPKKKVVLLSAIGRTYEPRASTVSNEDLQVVLAPSIEVYPGFPKSLNVTCTPPGSKSISNRALVLAALGSGTCRIKNLLHSDDTEVMLTALERLGAATFSWESQGEVLVVNGNGGRMVASPKELYLGNAGTASRFLTTVATLAQKGSVASSVLTGNARMKQRPIGDLVDALKSNGADIEYLENPKSLPLKITASGGFAGGEMRLDAKVSSQYVTSLLMCAPYANEPVTLRLVGGKPVSQLYVDMTTAMMRSFGIDVKKSETEEHTYHIPRGVYKNPAEYVVESDASSATYPLAIAAMTGTSCTVPNIGSKSLQGDARFAIEVLRPMGCTVNQTDFSTSVTGTAGGKLKSLPTIDMEPMTDAFLTASVLAAVARGQGSNHTTRICGIANQRVKECNRIKAMKDELAKFGVTCREHDDGLEIDGIDRSTLRHPTEGVFCYDDHRVAMSFSVLALVAPQPTLILEKECVGKTWPGWWNTLAQTFKVKLDGKEVEVEEVEVEERAKTNGVAHLDKSAASIFIIGMRGAGKTTSGVWVSKALQRPFIDLDDELEKSEGMTIPEMIKQRGWEGFRDSELALLRRVMTEKPMGYIFACGGGVVELPEARELLTQYHKTKGNVILAMRDIKEVMDFLKIDKTRPAYVEDMMSVWLRRKPWYQECSNIQYYSRITQPDGMAQVLHGFNRFLKVITGQLDSLAQMRRKENTFFVSLTFPDLTPASNILKEVTLGSDAVELRVDLLKDPQSDSEIPSVDYVAEQISVLRSRVSVPLVFTIRTKSQGGRFPDDAYDAALQLYRLAIRMGSEFVDLELSFPKQLLRTVTEMKGFSKIIASHHDPEGLLSWANGSWIQIYNKALQYGDVIKLVGVAKTLDDNASLKKFKTWAEAKHDVPLIAINMGYKGQLSRILNGFMTPVSHPSLPFKAAPGQLSAREIRKGLSLMGEIKAKKFAVIGKPVSSSRSPAMHNALFKQMGLPHTYGRIETDNVEDVKEFILSPDFGGASVTIPLKLDIMPLLDEIAPEAEMIGAVNTIVSVPAAPGDKFQSSRLIGRNTDWQGMVRCLSDAGAYSAATPTTSSAGLIIGGGGTARAAIFALNSMSYSPIYIVGRSPEKLACMASSFPADYNIRIVDDVKALESLPMVAIGTIPGDKPIELHMREVLCEILSLCEKANVEAERKTGITPKRILLEMAYKPSVTSLMKLASDAGWTVLPGLEVLVAQGVYQSEYWTDITPVYENARKAVMGVSSSDDTIS.

Positions 1 to 384 are 3-dehydroquinate synthase; sequence MGVPTKISIL…YEPRASTVSN (384 aa). Residues 44–46, 81–84, 114–116, and Asp-119 contribute to the NAD(+) site; these read DTN, ESSK, and GGV. Arg-130 contributes to the 7-phospho-2-dehydro-3-deoxy-D-arabino-heptonate binding site. 139–140 is an NAD(+) binding site; that stretch reads TT. Positions 146 and 152 each coordinate 7-phospho-2-dehydro-3-deoxy-D-arabino-heptonate. An NAD(+)-binding site is contributed by Lys-161. Asn-162 is a 7-phospho-2-dehydro-3-deoxy-D-arabino-heptonate binding site. Residues 179–182 and Asn-190 each bind NAD(+); that span reads FLNT. A Zn(2+)-binding site is contributed by Glu-194. Residues 194-197 and Lys-250 each bind 7-phospho-2-dehydro-3-deoxy-D-arabino-heptonate; that span reads EVIK. The Proton acceptor; for 3-dehydroquinate synthase activity role is filled by Glu-260. 7-phospho-2-dehydro-3-deoxy-D-arabino-heptonate contacts are provided by residues 264–268 and His-271; that span reads RNLLN. Residue His-271 coordinates Zn(2+). His-275 functions as the Proton acceptor; for 3-dehydroquinate synthase activity in the catalytic mechanism. 7-phospho-2-dehydro-3-deoxy-D-arabino-heptonate-binding residues include His-287 and Lys-356. His-287 provides a ligand contact to Zn(2+). Residues 397-842 are EPSP synthase; the sequence is VYPGFPKSLN…WNTLAQTFKV (446 aa). Cys-824 functions as the For EPSP synthase activity in the catalytic mechanism. Positions 872–1064 are shikimate kinase; it reads AASIFIIGMR…RRKENTFFVS (193 aa). 879–886 contributes to the ATP binding site; sequence GMRGAGKT. Residues 1065-1285 form a 3-dehydroquinase region; it reads LTFPDLTPAS…AAPGQLSARE (221 aa). Residue His-1188 is the Proton acceptor; for 3-dehydroquinate dehydratase activity of the active site. Lys-1216 acts as the Schiff-base intermediate with substrate; for 3-dehydroquinate dehydratase activity in catalysis. The tract at residues 1298–1603 is shikimate dehydrogenase; that stretch reads AKKFAVIGKP…GVSSSDDTIS (306 aa).

This sequence in the N-terminal section; belongs to the sugar phosphate cyclases superfamily. Dehydroquinate synthase family. It in the 2nd section; belongs to the EPSP synthase family. The protein in the 3rd section; belongs to the shikimate kinase family. In the 4th section; belongs to the type-I 3-dehydroquinase family. This sequence in the C-terminal section; belongs to the shikimate dehydrogenase family. As to quaternary structure, homodimer. Requires Zn(2+) as cofactor.

It is found in the cytoplasm. The catalysed reaction is 7-phospho-2-dehydro-3-deoxy-D-arabino-heptonate = 3-dehydroquinate + phosphate. It carries out the reaction 3-dehydroquinate = 3-dehydroshikimate + H2O. The enzyme catalyses shikimate + NADP(+) = 3-dehydroshikimate + NADPH + H(+). It catalyses the reaction shikimate + ATP = 3-phosphoshikimate + ADP + H(+). The catalysed reaction is 3-phosphoshikimate + phosphoenolpyruvate = 5-O-(1-carboxyvinyl)-3-phosphoshikimate + phosphate. Its pathway is metabolic intermediate biosynthesis; chorismate biosynthesis; chorismate from D-erythrose 4-phosphate and phosphoenolpyruvate: step 2/7. The protein operates within metabolic intermediate biosynthesis; chorismate biosynthesis; chorismate from D-erythrose 4-phosphate and phosphoenolpyruvate: step 3/7. It functions in the pathway metabolic intermediate biosynthesis; chorismate biosynthesis; chorismate from D-erythrose 4-phosphate and phosphoenolpyruvate: step 4/7. It participates in metabolic intermediate biosynthesis; chorismate biosynthesis; chorismate from D-erythrose 4-phosphate and phosphoenolpyruvate: step 5/7. Its pathway is metabolic intermediate biosynthesis; chorismate biosynthesis; chorismate from D-erythrose 4-phosphate and phosphoenolpyruvate: step 6/7. In terms of biological role, the AROM polypeptide catalyzes 5 consecutive enzymatic reactions in prechorismate polyaromatic amino acid biosynthesis. The chain is Pentafunctional AROM polypeptide from Paracoccidioides brasiliensis (strain Pb03).